The primary structure comprises 475 residues: ADP-ribosyltransferase toxin AexT (475 aa).

Residues 93-226 (VSPEDLQRLM…LQRAVKAEVA (134 aa)) form the Bacterial Rho-GAP domain. A TR mART core domain is found at 260–436 (EGLQEQFGLE…RVLEEASLGE (177 aa)). Catalysis depends on residues Arg-340, Ser-364, and Glu-403.

It localises to the secreted. In terms of biological role, directly involved in the toxicity for RTG-2 (rainbow trout gonad) fish cells. The sequence is that of ADP-ribosyltransferase toxin AexT (aexT) from Aeromonas salmonicida.